The primary structure comprises 211 residues: Thymidylate kinase (211 aa).

11–18 is a binding site for ATP; the sequence is GPDGAGKT.

It belongs to the thymidylate kinase family.

It carries out the reaction dTMP + ATP = dTDP + ADP. Its function is as follows. Phosphorylation of dTMP to form dTDP in both de novo and salvage pathways of dTTP synthesis. This chain is Thymidylate kinase, found in Streptococcus pyogenes serotype M6 (strain ATCC BAA-946 / MGAS10394).